The chain runs to 408 residues: Chaperonin GroEL (408 aa).

ATP contacts are provided by residues 30-33 (TLGP), lysine 51, and 87-91 (DGTTT).

Belongs to the chaperonin (HSP60) family. Forms a cylinder of 14 subunits composed of two heptameric rings stacked back-to-back. Interacts with the co-chaperonin GroES.

The protein resides in the cytoplasm. The catalysed reaction is ATP + H2O + a folded polypeptide = ADP + phosphate + an unfolded polypeptide.. Together with its co-chaperonin GroES, plays an essential role in assisting protein folding. The GroEL-GroES system forms a nano-cage that allows encapsulation of the non-native substrate proteins and provides a physical environment optimized to promote and accelerate protein folding. The polypeptide is Chaperonin GroEL (Rickettsia rickettsii).